The following is a 303-amino-acid chain: Small ribosomal subunit protein uS2 (303 aa).

The disordered stretch occupies residues 258 to 303 (ATLRENAVVTENEVKKTDEEEGASSEAARADAQNEEAVAKPGEEVE). A compositionally biased stretch (basic and acidic residues) spans 294 to 303 (AVAKPGEEVE).

This sequence belongs to the universal ribosomal protein uS2 family.

This chain is Small ribosomal subunit protein uS2, found in Bifidobacterium animalis subsp. lactis (strain AD011).